The chain runs to 331 residues: Ketol-acid reductoisomerase (NADP(+)) (331 aa).

Residues 2–182 enclose the KARI N-terminal Rossmann domain; that stretch reads VEIYYDDDAN…GGTRAGALRT (181 aa). Residues 25-28, Ser-51, and Ser-53 contribute to the NADP(+) site; that span reads FGSQ. His-108 is a catalytic residue. Gly-134 lines the NADP(+) pocket. One can recognise a KARI C-terminal knotted domain in the interval 183–328; the sequence is TFTEETETDL…GKLRPMMSWI (146 aa). Mg(2+) contacts are provided by Asp-191, Glu-195, Glu-227, and Glu-231. Ser-252 serves as a coordination point for substrate.

This sequence belongs to the ketol-acid reductoisomerase family. It depends on Mg(2+) as a cofactor.

The catalysed reaction is (2R)-2,3-dihydroxy-3-methylbutanoate + NADP(+) = (2S)-2-acetolactate + NADPH + H(+). The enzyme catalyses (2R,3R)-2,3-dihydroxy-3-methylpentanoate + NADP(+) = (S)-2-ethyl-2-hydroxy-3-oxobutanoate + NADPH + H(+). It functions in the pathway amino-acid biosynthesis; L-isoleucine biosynthesis; L-isoleucine from 2-oxobutanoate: step 2/4. The protein operates within amino-acid biosynthesis; L-valine biosynthesis; L-valine from pyruvate: step 2/4. Involved in the biosynthesis of branched-chain amino acids (BCAA). Catalyzes an alkyl-migration followed by a ketol-acid reduction of (S)-2-acetolactate (S2AL) to yield (R)-2,3-dihydroxy-isovalerate. In the isomerase reaction, S2AL is rearranged via a Mg-dependent methyl migration to produce 3-hydroxy-3-methyl-2-ketobutyrate (HMKB). In the reductase reaction, this 2-ketoacid undergoes a metal-dependent reduction by NADPH to yield (R)-2,3-dihydroxy-isovalerate. The protein is Ketol-acid reductoisomerase (NADP(+)) of Parafrankia sp. (strain EAN1pec).